The following is a 910-amino-acid chain: DNA mismatch repair protein MutS (910 aa).

Over residues 1 to 11 (MEAKVEEKEPE) the composition is skewed to basic and acidic residues. A disordered region spans residues 1-21 (MEAKVEEKEPEPVENAGPDAP). 658 to 665 (GPNMGGKS) contributes to the ATP binding site.

It belongs to the DNA mismatch repair MutS family.

Functionally, this protein is involved in the repair of mismatches in DNA. It is possible that it carries out the mismatch recognition step. This protein has a weak ATPase activity. This chain is DNA mismatch repair protein MutS, found in Brucella abortus (strain 2308).